The sequence spans 510 residues: 2,3-bisphosphoglycerate-independent phosphoglycerate mutase (510 aa).

Mn(2+)-binding residues include D12 and S62. The Phosphoserine intermediate role is filled by S62. Substrate-binding positions include H123, 153–154 (RD), R185, R191, 261–264 (RPDR), and K336. Positions 403, 407, 444, 445, and 462 each coordinate Mn(2+).

This sequence belongs to the BPG-independent phosphoglycerate mutase family. In terms of assembly, monomer. Mn(2+) serves as cofactor.

The catalysed reaction is (2R)-2-phosphoglycerate = (2R)-3-phosphoglycerate. It participates in carbohydrate degradation; glycolysis; pyruvate from D-glyceraldehyde 3-phosphate: step 3/5. Its function is as follows. Essential for rapid growth and for sporulation. Catalyzes the interconversion of 2-phosphoglycerate and 3-phosphoglycerate. The polypeptide is 2,3-bisphosphoglycerate-independent phosphoglycerate mutase (Priestia megaterium (strain ATCC 12872 / QMB1551) (Bacillus megaterium)).